The following is a 91-amino-acid chain: Glycophorin-B (91 aa).

An N-terminal signal peptide occupies residues methionine 1–alanine 19. At leucine 20–alanine 59 the chain is on the extracellular side. Threonine 36 carries an O-linked (GalNAc...) threonine glycan. Serine 38 is a glycosylation site (O-linked (GalNAc...) serine). A helical transmembrane segment spans residues proline 60–isoleucine 81. Residues serine 82–alanine 91 are Cytoplasmic-facing.

It belongs to the glycophorin-A family. As to quaternary structure, component of the ankyrin-1 complex in the erythrocyte, composed of ANK1, RHCE, RHAG, SLC4A1, EPB42, GYPA, GYPB and AQP1. Interacts (via the N-terminal) with RHAG; this interaction bridges the (RHAG)2(RHCE) heterotrimer with the SLC4A1 Band 3 I dimer complexed with GYPA. The N-terminal extracellular domain is heavily glycosylated on serine and threonine residues.

The protein resides in the cell membrane. Its function is as follows. Component of the ankyrin-1 complex, a multiprotein complex involved in the stability and shape of the erythrocyte membrane. The sequence is that of Glycophorin-B from Homo sapiens (Human).